A 249-amino-acid chain; its full sequence is 5'-nucleotidase SurE (249 aa).

Residues D8, D9, S39, and N91 each contribute to the a divalent metal cation site.

Belongs to the SurE nucleotidase family. A divalent metal cation is required as a cofactor.

The protein resides in the cytoplasm. It carries out the reaction a ribonucleoside 5'-phosphate + H2O = a ribonucleoside + phosphate. In terms of biological role, nucleotidase that shows phosphatase activity on nucleoside 5'-monophosphates. This is 5'-nucleotidase SurE from Pseudomonas syringae pv. tomato (strain ATCC BAA-871 / DC3000).